The primary structure comprises 711 residues: Polyribonucleotide nucleotidyltransferase (711 aa).

Mg(2+)-binding residues include D486 and D492. Residues 553 to 612 form the KH domain; that stretch reads PRIHTIKINPDKIKDVIGKGGSVIRALTEETGTTIEIEDDGTVKIAATDGEKAKHAIRRI. The S1 motif domain maps to 622 to 690; the sequence is GRVYTGKVTR…RQGRIRLSIK (69 aa). The disordered stretch occupies residues 689–711; the sequence is IKEATEQSQPAAAPEAPAAEQGE. Low complexity predominate over residues 694 to 711; the sequence is EQSQPAAAPEAPAAEQGE.

Belongs to the polyribonucleotide nucleotidyltransferase family. Component of the RNA degradosome, which is a multiprotein complex involved in RNA processing and mRNA degradation. Mg(2+) is required as a cofactor.

Its subcellular location is the cytoplasm. It catalyses the reaction RNA(n+1) + phosphate = RNA(n) + a ribonucleoside 5'-diphosphate. Involved in mRNA degradation. Catalyzes the phosphorolysis of single-stranded polyribonucleotides processively in the 3'- to 5'-direction. The chain is Polyribonucleotide nucleotidyltransferase from Escherichia coli O8 (strain IAI1).